We begin with the raw amino-acid sequence, 281 residues long: Pantothenate synthetase (281 aa).

31–38 (MGNLHAGH) lines the ATP pocket. Catalysis depends on H38, which acts as the Proton donor. A (R)-pantoate-binding site is contributed by Q62. Q62 serves as a coordination point for beta-alanine. An ATP-binding site is contributed by 150–153 (GKKD). Q156 provides a ligand contact to (R)-pantoate. ATP is bound by residues V179 and 187 to 190 (MSSR).

Belongs to the pantothenate synthetase family. Homodimer.

The protein localises to the cytoplasm. It carries out the reaction (R)-pantoate + beta-alanine + ATP = (R)-pantothenate + AMP + diphosphate + H(+). It participates in cofactor biosynthesis; (R)-pantothenate biosynthesis; (R)-pantothenate from (R)-pantoate and beta-alanine: step 1/1. Catalyzes the condensation of pantoate with beta-alanine in an ATP-dependent reaction via a pantoyl-adenylate intermediate. The polypeptide is Pantothenate synthetase (Xylella fastidiosa (strain M12)).